The chain runs to 156 residues: Large ribosomal subunit protein uL22 (156 aa).

It belongs to the universal ribosomal protein uL22 family. In terms of assembly, part of the 50S ribosomal subunit.

This protein binds specifically to 23S rRNA. It makes multiple contacts with different domains of the 23S rRNA in the assembled 50S subunit and ribosome. Functionally, the globular domain of the protein is located near the polypeptide exit tunnel on the outside of the subunit, while an extended beta-hairpin is found that lines the wall of the exit tunnel in the center of the 70S ribosome. This Halobacterium salinarum (strain ATCC 700922 / JCM 11081 / NRC-1) (Halobacterium halobium) protein is Large ribosomal subunit protein uL22.